Here is a 323-residue protein sequence, read N- to C-terminus: Low affinity immunoglobulin gamma Fc region receptor II-c (323 aa).

Positions 1–42 are cleaved as a signal peptide; that stretch reads MGILSFLPVLATESDWADCKSPQPWGHMLLWTAVLFLAPVAG. At 43–223 the chain is on the extracellular side; it reads TPAAPPKAVL…VQAPSSSPMG (181 aa). Ig-like C2-type domains follow at residues 48 to 127 and 131 to 213; these read PKAV…VHLT and EWLV…VTIT. Intrachain disulfides connect C71–C113 and C152–C196. N106, N180, and N187 each carry an N-linked (GlcNAc...) asparagine glycan. The chain crosses the membrane as a helical span at residues 224 to 246; that stretch reads IIVAVVTGIAVAAIVAAVVALIY. Over 247-323 the chain is Cytoplasmic; the sequence is CRKKRISANS…PPNDHVNSNN (77 aa). The tract at residues 277–323 is disordered; it reads KRQPEETNNDYETADGGYMTLNPRAPTDDDKNIYLTLPPNDHVNSNN. A phosphotyrosine; by SRC-type Tyr-kinases mark is found at Y294 and Y310.

Phosphorylated by SRC-type Tyr-kinases such as LYN, BLK, FYN and SYK. Isoform IIC1 is detected in monocytes, macrophages, polymorphonuclear cells and natural killer cells.

The protein resides in the cytoplasm. Its subcellular location is the cell membrane. Functionally, receptor for the Fc region of complexed immunoglobulins gamma. Low affinity receptor. Involved in a variety of effector and regulatory functions such as phagocytosis of immune complexes and modulation of antibody production by B-cells. In Homo sapiens (Human), this protein is Low affinity immunoglobulin gamma Fc region receptor II-c (FCGR2C).